Reading from the N-terminus, the 351-residue chain is uncharacterized protein (351 aa).

The N-terminal stretch at 1-27 is a signal peptide; that stretch reads MKNKKRVLIASSLSCAILLLSAATTQA. The segment at 28-71 is disordered; that stretch reads NSAHKDSQDQNKKEHVDKSQQKDKRNVTNKDKNSTVPDDIGKNG. Positions 30–60 are enriched in basic and acidic residues; the sequence is AHKDSQDQNKKEHVDKSQQKDKRNVTNKDKN.

This sequence belongs to the aerolysin family.

This is an uncharacterized protein from Staphylococcus aureus (strain N315).